A 231-amino-acid chain; its full sequence is Urease accessory protein UreE (231 aa).

A disordered region spans residues 185 to 231 (VASPLDEPHGSGLHIHGIHSHGEGHSHGDHDHDHSHSHGDHDHDHKH). Residues 204-231 (SHGEGHSHGDHDHDHSHSHGDHDHDHKH) are compositionally biased toward basic and acidic residues.

It belongs to the UreE family.

It localises to the cytoplasm. Its function is as follows. Involved in urease metallocenter assembly. Binds nickel. Probably functions as a nickel donor during metallocenter assembly. The chain is Urease accessory protein UreE from Yersinia pseudotuberculosis serotype O:1b (strain IP 31758).